A 220-amino-acid polypeptide reads, in one-letter code: MTWSDILAEEKQQPYFKQILDFLACESANGKVIFPAKENIFNAFKYTELDNLKVVILGQDPYHNYNQAHGLAFSVQKGVDIPPSLQNIYKELARSIPEFKIPNHGYLVDWAKQGVFLLNTTLTVEAHKANSHKDIGWETFTDTVISKISENKHNVVFMLWGSHARKKKVLIDSSRHLILESTHPSPLSAHRGFLGCNHFVDCNKYLIEKKSQKIDWNLLC.

The active-site Proton acceptor is the D60.

The protein belongs to the uracil-DNA glycosylase (UDG) superfamily. UNG family.

It is found in the cytoplasm. The enzyme catalyses Hydrolyzes single-stranded DNA or mismatched double-stranded DNA and polynucleotides, releasing free uracil.. Its function is as follows. Excises uracil residues from the DNA which can arise as a result of misincorporation of dUMP residues by DNA polymerase or due to deamination of cytosine. The chain is Uracil-DNA glycosylase from Francisella tularensis subsp. novicida (strain U112).